We begin with the raw amino-acid sequence, 769 residues long: 5-methyltetrahydropteroyltriglutamate--homocysteine methyltransferase (769 aa).

5-methyltetrahydropteroyltri-L-glutamate contacts are provided by residues 17 to 20 and Lys-118; that span reads RELK. L-homocysteine contacts are provided by residues 441–443 and Glu-494; that span reads IGS. L-methionine-binding positions include 441-443 and Glu-494; that span reads IGS. 5-methyltetrahydropteroyltri-L-glutamate-binding positions include 525–526 and Trp-571; that span reads RC. Asp-609 serves as a coordination point for L-homocysteine. Asp-609 provides a ligand contact to L-methionine. Residue Glu-615 participates in 5-methyltetrahydropteroyltri-L-glutamate binding. 3 residues coordinate Zn(2+): His-651, Cys-653, and Glu-675. His-705 acts as the Proton donor in catalysis. Cys-737 contributes to the Zn(2+) binding site.

The protein belongs to the vitamin-B12 independent methionine synthase family. Zn(2+) is required as a cofactor.

The catalysed reaction is 5-methyltetrahydropteroyltri-L-glutamate + L-homocysteine = tetrahydropteroyltri-L-glutamate + L-methionine. It functions in the pathway amino-acid biosynthesis; L-methionine biosynthesis via de novo pathway; L-methionine from L-homocysteine (MetE route): step 1/1. Catalyzes the transfer of a methyl group from 5-methyltetrahydrofolate to homocysteine resulting in methionine formation. The protein is 5-methyltetrahydropteroyltriglutamate--homocysteine methyltransferase of Blochmanniella floridana.